The primary structure comprises 131 residues: Profilin (131 aa).

It belongs to the profilin family. As to quaternary structure, occurs in many kinds of cells as a complex with monomeric actin in a 1:1 ratio.

Its subcellular location is the cytoplasm. The protein resides in the cytoskeleton. Binds to actin and affects the structure of the cytoskeleton. At high concentrations, profilin prevents the polymerization of actin, whereas it enhances it at low concentrations. By binding to PIP2, it inhibits the formation of IP3 and DG. In Cucumis melo (Muskmelon), this protein is Profilin.